An 864-amino-acid polypeptide reads, in one-letter code: Leucine--tRNA ligase (864 aa).

The 'HIGH' region signature appears at 50-60 (PYPSGKIHMGH). The 'KMSKS' region motif lies at 622 to 626 (KMSKS). Lys-625 lines the ATP pocket.

The protein belongs to the class-I aminoacyl-tRNA synthetase family.

It localises to the cytoplasm. It catalyses the reaction tRNA(Leu) + L-leucine + ATP = L-leucyl-tRNA(Leu) + AMP + diphosphate. The protein is Leucine--tRNA ligase of Acidiphilium cryptum (strain JF-5).